We begin with the raw amino-acid sequence, 163 residues long: ATP synthase subunit b 1 (163 aa).

The helical transmembrane segment at 7-27 (AETWVAIAFVILLGVFAYLGV) threads the bilayer.

It belongs to the ATPase B chain family. In terms of assembly, F-type ATPases have 2 components, F(1) - the catalytic core - and F(0) - the membrane proton channel. F(1) has five subunits: alpha(3), beta(3), gamma(1), delta(1), epsilon(1). F(0) has three main subunits: a(1), b(2) and c(10-14). The alpha and beta chains form an alternating ring which encloses part of the gamma chain. F(1) is attached to F(0) by a central stalk formed by the gamma and epsilon chains, while a peripheral stalk is formed by the delta and b chains.

It is found in the cell inner membrane. F(1)F(0) ATP synthase produces ATP from ADP in the presence of a proton or sodium gradient. F-type ATPases consist of two structural domains, F(1) containing the extramembraneous catalytic core and F(0) containing the membrane proton channel, linked together by a central stalk and a peripheral stalk. During catalysis, ATP synthesis in the catalytic domain of F(1) is coupled via a rotary mechanism of the central stalk subunits to proton translocation. In terms of biological role, component of the F(0) channel, it forms part of the peripheral stalk, linking F(1) to F(0). The sequence is that of ATP synthase subunit b 1 from Rhodopseudomonas palustris (strain ATCC BAA-98 / CGA009).